Here is a 196-residue protein sequence, read N- to C-terminus: DnaA initiator-associating protein DiaA (196 aa).

The region spanning 34–196 is the SIS domain; it reads LVQSLLNGNK…DNTLFPHQDD (163 aa).

Belongs to the SIS family. DiaA subfamily. As to quaternary structure, homotetramer; dimer of dimers.

Functionally, required for the timely initiation of chromosomal replication via direct interactions with the DnaA initiator protein. This Enterobacter sp. (strain 638) protein is DnaA initiator-associating protein DiaA.